Here is a 133-residue protein sequence, read N- to C-terminus: Large-conductance mechanosensitive channel (133 aa).

3 helical membrane-spanning segments follow: residues 8 to 28 (FAMKGNVVDLAVGVIIGGAFG), 30 to 50 (IVTSLVNDVIMPILGLILGGI), and 73 to 93 (GQFIQNILDFLIISFSIFLFI).

It belongs to the MscL family. In terms of assembly, homopentamer.

It localises to the cell membrane. Channel that opens in response to stretch forces in the membrane lipid bilayer. May participate in the regulation of osmotic pressure changes within the cell. This is Large-conductance mechanosensitive channel from Hathewaya histolytica (Clostridium histolyticum).